We begin with the raw amino-acid sequence, 268 residues long: tRNA pseudouridine synthase A (268 aa).

The Nucleophile role is filled by D52. Y110 is a substrate binding site.

It belongs to the tRNA pseudouridine synthase TruA family. As to quaternary structure, homodimer.

The catalysed reaction is uridine(38/39/40) in tRNA = pseudouridine(38/39/40) in tRNA. Formation of pseudouridine at positions 38, 39 and 40 in the anticodon stem and loop of transfer RNAs. This Prochlorococcus marinus (strain MIT 9215) protein is tRNA pseudouridine synthase A.